Here is a 91-residue protein sequence, read N- to C-terminus: Cytochrome b-c1 complex subunit 6, mitochondrial (91 aa).

A mitochondrion-targeting transit peptide spans 1-13; that stretch reads MGLEDEQKMLTES. Residues 1–30 form a disordered region; the sequence is MGLEDEQKMLTESGDPEEEEEEEEELVDPL. Residues 14–27 are compositionally biased toward acidic residues; the sequence is GDPEEEEEEEEELV. Intrachain disulfides connect Cys37-Cys81 and Cys53-Cys67. Position 42 is an N6-acetyllysine (Lys42). Lys85 carries the post-translational modification N6-acetyllysine.

Belongs to the UQCRH/QCR6 family. In terms of assembly, component of the ubiquinol-cytochrome c oxidoreductase (cytochrome b-c1 complex, complex III, CIII), a multisubunit enzyme composed of 11 subunits. The complex is composed of 3 respiratory subunits cytochrome b, cytochrome c1 and Rieske protein UQCRFS1, 2 core protein subunits UQCRC1/QCR1 and UQCRC2/QCR2, and 6 low-molecular weight protein subunits UQCRH/QCR6, UQCRB/QCR7, UQCRQ/QCR8, UQCR10/QCR9, UQCR11/QCR10 and subunit 9, the cleavage product of Rieske protein UQCRFS1. The complex exists as an obligatory dimer and forms supercomplexes (SCs) in the inner mitochondrial membrane with NADH-ubiquinone oxidoreductase (complex I, CI) and cytochrome c oxidase (complex IV, CIV), resulting in different assemblies (supercomplex SCI(1)III(2)IV(1) and megacomplex MCI(2)III(2)IV(2)).

It localises to the mitochondrion inner membrane. In terms of biological role, component of the ubiquinol-cytochrome c oxidoreductase, a multisubunit transmembrane complex that is part of the mitochondrial electron transport chain which drives oxidative phosphorylation. The respiratory chain contains 3 multisubunit complexes succinate dehydrogenase (complex II, CII), ubiquinol-cytochrome c oxidoreductase (cytochrome b-c1 complex, complex III, CIII) and cytochrome c oxidase (complex IV, CIV), that cooperate to transfer electrons derived from NADH and succinate to molecular oxygen, creating an electrochemical gradient over the inner membrane that drives transmembrane transport and the ATP synthase. The cytochrome b-c1 complex catalyzes electron transfer from ubiquinol to cytochrome c, linking this redox reaction to translocation of protons across the mitochondrial inner membrane, with protons being carried across the membrane as hydrogens on the quinol. In the process called Q cycle, 2 protons are consumed from the matrix, 4 protons are released into the intermembrane space and 2 electrons are passed to cytochrome c. The protein is Cytochrome b-c1 complex subunit 6, mitochondrial (UQCRH) of Homo sapiens (Human).